Here is a 381-residue protein sequence, read N- to C-terminus: Neuropeptide Y receptor type 2 (381 aa).

The interval 1-35 (MGPIGTEADENQTVEEMKVEQYGPQTTPRGELVPD) is disordered. Over 1-51 (MGPIGTEADENQTVEEMKVEQYGPQTTPRGELVPDPEPELIDSTKLIEVQV) the chain is Extracellular. Residue Asn11 is glycosylated (N-linked (GlcNAc...) asparagine). The chain crosses the membrane as a helical span at residues 52–72 (VLILAYCSIILLGVIGNSLVI). Residues 73–86 (HVVIKFKSMRTVTN) lie on the Cytoplasmic side of the membrane. Residues 87 to 107 (FFIANLAVADLVVNTLCLPFT) traverse the membrane as a helical segment. The Extracellular portion of the chain corresponds to 108–124 (LTYTLMGEWKMGPVLCH). Cys123 and Cys203 are joined by a disulfide. A helical transmembrane segment spans residues 125-145 (LVPYAQGLAVQVSTITLTVIA). Residues 146 to 165 (LDRHRCIVYHLESKISKRIS) are Cytoplasmic-facing. A helical membrane pass occupies residues 166–186 (FLIIGLAWGISALLASPLAIF). Residues 187–216 (REYSLIEIIPDFEIVACTEKWPGEEKSIYG) lie on the Extracellular side of the membrane. A helical membrane pass occupies residues 217–237 (TVYSLSSLLILYVLPLGIISF). The Cytoplasmic segment spans residues 238 to 268 (SYTRIWSKLKSHVSPGAANDHYHQRRQKTTK). Residues 269–289 (MLVCVVVVFAVSWLPLHAFQL) form a helical membrane-spanning segment. Topologically, residues 290-304 (AVDIDSHVLDLKEYK) are extracellular. The chain crosses the membrane as a helical span at residues 305-325 (LIFTVFHIIAMCSTFANPLLY). Residues 326–381 (GWMNSNYRKAFLSAFRCEQRLDAIHSEVSVTFKAKKNLEVRKNSGPNDSFTEATNV) are Cytoplasmic-facing. The S-palmitoyl cysteine moiety is linked to residue Cys342.

This sequence belongs to the G-protein coupled receptor 1 family.

Its subcellular location is the cell membrane. In terms of biological role, receptor for neuropeptide Y and peptide YY. The sequence is that of Neuropeptide Y receptor type 2 (NPY2R) from Macaca mulatta (Rhesus macaque).